The following is a 562-amino-acid chain: Glutamate--tRNA ligase (562 aa).

Positions 101–111 match the 'HIGH' region motif; that stretch reads PEPNGYPHIGH.

It belongs to the class-I aminoacyl-tRNA synthetase family. Glutamate--tRNA ligase type 2 subfamily.

The protein resides in the cytoplasm. It catalyses the reaction tRNA(Glu) + L-glutamate + ATP = L-glutamyl-tRNA(Glu) + AMP + diphosphate. Its function is as follows. Catalyzes the attachment of glutamate to tRNA(Glu) in a two-step reaction: glutamate is first activated by ATP to form Glu-AMP and then transferred to the acceptor end of tRNA(Glu). This Cenarchaeum symbiosum (strain A) protein is Glutamate--tRNA ligase.